Consider the following 178-residue polypeptide: Large ribosomal subunit protein bL17 (178 aa).

This sequence belongs to the bacterial ribosomal protein bL17 family. In terms of assembly, part of the 50S ribosomal subunit. Contacts protein L32.

This is Large ribosomal subunit protein bL17 from Lachnospira eligens (strain ATCC 27750 / DSM 3376 / VPI C15-48 / C15-B4) (Eubacterium eligens).